The primary structure comprises 636 residues: 1-deoxy-D-xylulose-5-phosphate synthase (636 aa).

Thiamine diphosphate is bound by residues His75 and Ala116–Ser118. A Mg(2+)-binding site is contributed by Asp147. Thiamine diphosphate-binding positions include Gly148–Ala149, Asn177, Tyr288, and Glu370. A Mg(2+)-binding site is contributed by Asn177.

This sequence belongs to the transketolase family. DXPS subfamily. Homodimer. The cofactor is Mg(2+). Thiamine diphosphate serves as cofactor.

The enzyme catalyses D-glyceraldehyde 3-phosphate + pyruvate + H(+) = 1-deoxy-D-xylulose 5-phosphate + CO2. The protein operates within metabolic intermediate biosynthesis; 1-deoxy-D-xylulose 5-phosphate biosynthesis; 1-deoxy-D-xylulose 5-phosphate from D-glyceraldehyde 3-phosphate and pyruvate: step 1/1. In terms of biological role, catalyzes the acyloin condensation reaction between C atoms 2 and 3 of pyruvate and glyceraldehyde 3-phosphate to yield 1-deoxy-D-xylulose-5-phosphate (DXP). This is 1-deoxy-D-xylulose-5-phosphate synthase from Ralstonia nicotianae (strain ATCC BAA-1114 / GMI1000) (Ralstonia solanacearum).